A 466-amino-acid chain; its full sequence is Cytochrome c-552 (466 aa).

The signal sequence occupies residues 1-27; sequence MVRILTKKSFALSALVAASLMASGAMA. Position 87 (His-87) interacts with heme c. The heme site is built by Cys-115, Cys-118, and Lys-119. Heme c contacts are provided by Cys-153, Cys-156, His-157, Cys-195, Cys-198, and His-199. 4 residues coordinate Ca(2+): Glu-201, Tyr-202, Lys-250, and Gln-252. Tyr-202 contributes to the substrate binding site. His-253 is a substrate binding site. His-264, Cys-271, Cys-274, His-275, His-290, Cys-303, Cys-306, His-307, and His-382 together coordinate heme c.

It belongs to the cytochrome c-552 family. The cofactor is Ca(2+). It depends on heme c as a cofactor.

The protein resides in the periplasm. It catalyses the reaction 6 Fe(III)-[cytochrome c] + NH4(+) + 2 H2O = 6 Fe(II)-[cytochrome c] + nitrite + 8 H(+). It functions in the pathway nitrogen metabolism; nitrate reduction (assimilation). Functionally, catalyzes the reduction of nitrite to ammonia, consuming six electrons in the process. This Shewanella woodyi (strain ATCC 51908 / MS32) protein is Cytochrome c-552.